Here is an 845-residue protein sequence, read N- to C-terminus: Putative DEAD-box ATP-dependent RNA helicase 29 (845 aa).

The Q motif signature appears at 28–56; that stretch reads GGFESLNLGPNVFNAIKKKGYKVPTPIQR. In terms of domain architecture, Helicase ATP-binding spans 59–232; that stretch reads MPLILSGVDV…KAGLREPQLV (174 aa). 72–79 serves as a coordination point for ATP; that stretch reads ARTGSGKT. The short motif at 180–183 is the DEAD box element; sequence DEAD. The region spanning 256 to 411 is the Helicase C-terminal domain; it reads KYSALLYLVR…EVLKNMEEVM (156 aa). Residues 675 to 845 are disordered; it reads SGKIKTESGA…GGGGKRGRGR (171 aa). Composition is skewed to basic and acidic residues over residues 696–716 and 738–754; these read RWQE…DETT and VRSE…ERQQ. A compositionally biased stretch (gly residues) spans 770–799; that stretch reads GGRGGARGGRGGGARGGRGGSRDFGGGGRD. Residues 806-817 show a composition bias toward basic and acidic residues; that stretch reads RGGRSGGRDFGG. A compositionally biased stretch (basic residues) spans 828–845; it reads GGKRGGGRGGGGKRGRGR.

The protein belongs to the DEAD box helicase family. DDX54/DBP10 subfamily.

The enzyme catalyses ATP + H2O = ADP + phosphate + H(+). The chain is Putative DEAD-box ATP-dependent RNA helicase 29 (RH29) from Arabidopsis thaliana (Mouse-ear cress).